Here is a 253-residue protein sequence, read N- to C-terminus: uncharacterized protein (253 aa).

Residues Trp-62–Tyr-78 traverse the membrane as a helical segment. A compositionally biased stretch (low complexity) spans Thr-141–Glu-158. The segment at Thr-141–His-225 is disordered. Acidic residues predominate over residues Asn-200–His-216.

It is found in the host membrane. This is an uncharacterized protein from Aedes vexans (Inland floodwater mosquito).